We begin with the raw amino-acid sequence, 641 residues long: Macrolide export ATP-binding/permease protein MacB (641 aa).

The ABC transporter domain occupies 2 to 236 (IFLKNICKNI…LTLKTMSKEK (235 aa)). ATP is bound at residue 34 to 41 (GQSGSGKT). The next 4 membrane-spanning stretches (helical) occupy residues 265–285 (ILTMLGIIIGIASVVCVVALG), 519–539 (ACVAVIALIVGGIGVMNIMLV), 571–591 (MICTIGAILGVILSIFVIFAF), and 604–624 (AYSVLLGLLSSMFIGVVFGFF).

It belongs to the ABC transporter superfamily. Macrolide exporter (TC 3.A.1.122) family. In terms of assembly, homodimer.

It localises to the cell inner membrane. Functionally, non-canonical ABC transporter that contains transmembrane domains (TMD), which form a pore in the inner membrane, and an ATP-binding domain (NBD), which is responsible for energy generation. Confers resistance against macrolides. The polypeptide is Macrolide export ATP-binding/permease protein MacB (Campylobacter jejuni subsp. jejuni serotype O:23/36 (strain 81-176)).